A 366-amino-acid chain; its full sequence is ATP-dependent 6-phosphofructokinase 2 (366 aa).

ATP contacts are provided by residues Gly-15, 78–79 (KD), and 119–122 (GDGT). Asp-120 contributes to the Mg(2+) binding site. Residues 142 to 144 (TID), Arg-179, 186 to 188 (MGR), Glu-239, Arg-284, and 290 to 293 (HIQR) contribute to the substrate site. Asp-144 serves as the catalytic Proton acceptor.

Belongs to the phosphofructokinase type A (PFKA) family. Mixed-substrate PFK group III subfamily. In terms of assembly, homodimer or homotetramer. It depends on Mg(2+) as a cofactor.

The protein localises to the cytoplasm. It catalyses the reaction beta-D-fructose 6-phosphate + ATP = beta-D-fructose 1,6-bisphosphate + ADP + H(+). It participates in carbohydrate degradation; glycolysis; D-glyceraldehyde 3-phosphate and glycerone phosphate from D-glucose: step 3/4. Subject to allosteric activation by ADP and other diphosphonucleosides, and inhibition by phosphoenolpyruvate. Its function is as follows. Catalyzes the phosphorylation of D-fructose 6-phosphate to fructose 1,6-bisphosphate by ATP, the first committing step of glycolysis. The polypeptide is ATP-dependent 6-phosphofructokinase 2 (Clostridium perfringens (strain 13 / Type A)).